The primary structure comprises 528 residues: Glucose-6-phosphate isomerase (528 aa).

The active-site Proton donor is the Glu-322. Active-site residues include His-351 and Lys-455.

Belongs to the GPI family.

Its subcellular location is the cytoplasm. It catalyses the reaction alpha-D-glucose 6-phosphate = beta-D-fructose 6-phosphate. Its pathway is carbohydrate biosynthesis; gluconeogenesis. It participates in carbohydrate degradation; glycolysis; D-glyceraldehyde 3-phosphate and glycerone phosphate from D-glucose: step 2/4. Its function is as follows. Catalyzes the reversible isomerization of glucose-6-phosphate to fructose-6-phosphate. In Synechococcus elongatus (strain ATCC 33912 / PCC 7942 / FACHB-805) (Anacystis nidulans R2), this protein is Glucose-6-phosphate isomerase.